Here is a 401-residue protein sequence, read N- to C-terminus: Alpha-(1,4)-fucosyltransferase (401 aa).

Residues 1-4 (MPMR) lie on the Cytoplasmic side of the membrane. Residues 5–27 (YLNAMAALLMMFFTLLILSFTGI) traverse the membrane as a helical; Signal-anchor for type II membrane protein segment. Residues 28–401 (LEFPSASTSM…SRRGGKNAGV (374 aa)) lie on the Lumenal side of the membrane. N85 carries an N-linked (GlcNAc...) asparagine glycan.

This sequence belongs to the glycosyltransferase 10 family. In terms of tissue distribution, present in root, stem, flower buds and green siliques.

The protein resides in the golgi apparatus. It localises to the golgi stack membrane. It participates in protein modification; protein glycosylation. In terms of biological role, may be involved in cell wall synthesis. Catalyzes alpha-1,4 glycosidic linkages and generates Lewis-a epitopes. This Arabidopsis thaliana (Mouse-ear cress) protein is Alpha-(1,4)-fucosyltransferase (FUT13).